The following is a 483-amino-acid chain: ATP synthase subunit beta (483 aa).

162 to 169 (GGAGVGKT) is a binding site for ATP.

This sequence belongs to the ATPase alpha/beta chains family. As to quaternary structure, F-type ATPases have 2 components, CF(1) - the catalytic core - and CF(0) - the membrane proton channel. CF(1) has five subunits: alpha(3), beta(3), gamma(1), delta(1), epsilon(1). CF(0) has four main subunits: a(1), b(1), b'(1) and c(9-12).

The protein localises to the cellular thylakoid membrane. The catalysed reaction is ATP + H2O + 4 H(+)(in) = ADP + phosphate + 5 H(+)(out). In terms of biological role, produces ATP from ADP in the presence of a proton gradient across the membrane. The catalytic sites are hosted primarily by the beta subunits. The sequence is that of ATP synthase subunit beta from Rippkaea orientalis (strain PCC 8801 / RF-1) (Cyanothece sp. (strain PCC 8801)).